The following is a 904-amino-acid chain: Envelope glycoprotein B (904 aa).

The signal sequence occupies residues 1–22 (MRGGGLICALVVGALVAAVASA). Topologically, residues 23–771 (APAAPAAPRA…SGVSSFMSNP (749 aa)) are virion surface. Residues 40–83 (VAANGGPASRPPPVPSPATTKARKRKTKKPPKRPEATPPPDANA) form a disordered region. A compositionally biased stretch (basic residues) spans 60 to 70 (KARKRKTKKPP). Residues Asn82 and Asn136 are each glycosylated (N-linked (GlcNAc...) asparagine; by host). 5 disulfides stabilise this stretch: Cys111-Cys570, Cys128-Cys526, Cys202-Cys266, Cys359-Cys407, and Cys593-Cys630. Involved in fusion and/or binding to host membrane regions lie at residues 168-174 (VWFGHRY) and 253-260 (RVEAFHRY). N-linked (GlcNAc...) asparagine; by host glycans are attached at residues Asn393, Asn425, and Asn486. Residues 467–490 (QDRKPRNATPAPLREAPSANASVE) form a disordered region. N-linked (GlcNAc...) asparagine; by host glycosylation is present at Asn671. Hydrophobic membrane proximal region stretches follow at residues 716–769 (IDTV…SFMS) and 728–768 (MFAG…SSFM). A helical transmembrane segment spans residues 772 to 792 (FGALAVGLLVLAGLVAAFFAF). Over 793–904 (RYVLQLQRNP…EDEAGDEDEL (112 aa)) the chain is Intravirion. The segment at 816-835 (TSDPGGVGGEGEEGAEGGGF) is disordered. The Golgi targeting signature appears at 849–852 (YMAL). Residues 883-904 (KRNKARYSPLHNEDEAGDEDEL) form a disordered region. Positions 889-892 (YSPL) match the Internalization motif motif.

This sequence belongs to the herpesviridae glycoprotein B family. Homotrimer; disulfide-linked. Binds to heparan sulfate proteoglycans. Interacts with gH/gL heterodimer.

It localises to the virion membrane. It is found in the host cell membrane. The protein resides in the host endosome membrane. Its subcellular location is the host Golgi apparatus membrane. Its function is as follows. Envelope glycoprotein that forms spikes at the surface of virion envelope. Essential for the initial attachment to heparan sulfate moieties of the host cell surface proteoglycans. Involved in fusion of viral and cellular membranes leading to virus entry into the host cell. Following initial binding to its host receptors, membrane fusion is mediated by the fusion machinery composed at least of gB and the heterodimer gH/gL. May be involved in the fusion between the virion envelope and the outer nuclear membrane during virion egress. This chain is Envelope glycoprotein B, found in Homo sapiens (Human).